The following is a 494-amino-acid chain: Alpha-amylase-related protein (494 aa).

Residues 1-20 form the signal peptide; sequence MIKFALALTLCLAGASLSLA. Glutamine 21 carries the pyrrolidone carboxylic acid modification. Cysteine 48 and cysteine 104 are joined by a disulfide. Positions 118, 169, and 178 each coordinate Ca(2+). A disulfide bridge links cysteine 157 with cysteine 171. Residue arginine 206 participates in chloride binding. Aspartate 208 acts as the Nucleophile in catalysis. Histidine 212 is a binding site for Ca(2+). Glutamate 245 (proton donor) is an active-site residue. Chloride contacts are provided by asparagine 308 and arginine 343. Intrachain disulfides connect cysteine 376/cysteine 382, cysteine 418/cysteine 441, and cysteine 448/cysteine 460.

The protein belongs to the glycosyl hydrolase 13 family. In terms of assembly, monomer. Requires Ca(2+) as cofactor. Chloride is required as a cofactor.

It is found in the secreted. It carries out the reaction Endohydrolysis of (1-&gt;4)-alpha-D-glucosidic linkages in polysaccharides containing three or more (1-&gt;4)-alpha-linked D-glucose units.. This is Alpha-amylase-related protein (Amyrel) from Drosophila lini (Fruit fly).